A 611-amino-acid polypeptide reads, in one-letter code: O-fucosyltransferase 8 (611 aa).

The tract at residues 1–29 is disordered; it reads MGKQGSPRSPRPETIDKEEKFGRRSLDSL. A compositionally biased stretch (basic and acidic residues) spans 10–26; that stretch reads PRPETIDKEEKFGRRSL. A helical; Signal-anchor for type II membrane protein membrane pass occupies residues 78–98; it reads IVLMISVTGFIFCMDSIMVSI. N-linked (GlcNAc...) asparagine glycosylation is found at asparagine 115, asparagine 216, and asparagine 270. A substrate-binding site is contributed by 386 to 388; it reads HLR. The N-linked (GlcNAc...) asparagine glycan is linked to asparagine 506.

It belongs to the glycosyltransferase GT106 family.

It localises to the membrane. It functions in the pathway glycan metabolism. The protein is O-fucosyltransferase 8 of Arabidopsis thaliana (Mouse-ear cress).